Consider the following 303-residue polypeptide: Cysteine synthase B (303 aa).

The residue at position 41 (K41) is an N6-(pyridoxal phosphate)lysine. Pyridoxal 5'-phosphate contacts are provided by residues N71, 174–178 (GTTGT), and S255.

This sequence belongs to the cysteine synthase/cystathionine beta-synthase family. Homodimer. It depends on pyridoxal 5'-phosphate as a cofactor.

The catalysed reaction is O-acetyl-L-serine + hydrogen sulfide = L-cysteine + acetate. It functions in the pathway amino-acid biosynthesis; L-cysteine biosynthesis; L-cysteine from L-serine: step 2/2. Functionally, two cysteine synthase enzymes are found. Both catalyze the same reaction. Cysteine synthase B can also use thiosulfate in place of sulfide to give cysteine thiosulfonate as a product. This Escherichia coli (strain K12) protein is Cysteine synthase B (cysM).